The sequence spans 173 residues: Small ribosomal subunit protein uS5 (173 aa).

One can recognise an S5 DRBM domain in the interval 17–80; that stretch reads LREKMIAVNR…EEARRNMVKV (64 aa).

Belongs to the universal ribosomal protein uS5 family. In terms of assembly, part of the 30S ribosomal subunit. Contacts proteins S4 and S8.

With S4 and S12 plays an important role in translational accuracy. Its function is as follows. Located at the back of the 30S subunit body where it stabilizes the conformation of the head with respect to the body. The sequence is that of Small ribosomal subunit protein uS5 from Acidovorax sp. (strain JS42).